A 149-amino-acid chain; its full sequence is D-aminoacyl-tRNA deacylase (149 aa).

Residues 137 to 138 carry the Gly-cisPro motif, important for rejection of L-amino acids motif; sequence GP.

This sequence belongs to the DTD family. Homodimer.

It localises to the cytoplasm. It carries out the reaction glycyl-tRNA(Ala) + H2O = tRNA(Ala) + glycine + H(+). The catalysed reaction is a D-aminoacyl-tRNA + H2O = a tRNA + a D-alpha-amino acid + H(+). Its function is as follows. An aminoacyl-tRNA editing enzyme that deacylates mischarged D-aminoacyl-tRNAs. Also deacylates mischarged glycyl-tRNA(Ala), protecting cells against glycine mischarging by AlaRS. Acts via tRNA-based rather than protein-based catalysis; rejects L-amino acids rather than detecting D-amino acids in the active site. By recycling D-aminoacyl-tRNA to D-amino acids and free tRNA molecules, this enzyme counteracts the toxicity associated with the formation of D-aminoacyl-tRNA entities in vivo and helps enforce protein L-homochirality. This chain is D-aminoacyl-tRNA deacylase, found in Clostridium novyi (strain NT).